Here is a 394-residue protein sequence, read N- to C-terminus: Purine ribonucleoside efflux pump NepI (394 aa).

The Cytoplasmic segment spans residues 1–21; sequence MSEFIAENRGADAITRPNWSA. A helical transmembrane segment spans residues 22-42; it reads VFSVAFCVACLIIVEFLPVSL. Residues 43 to 54 are Periplasmic-facing; that stretch reads LTPMAQDLGISE. The helical transmembrane segment at 55 to 75 threads the bilayer; it reads GVAGQSVTVTAFVAMFASLFI. Over 76-85 the chain is Cytoplasmic; sequence TQTIQATDRR. A helical membrane pass occupies residues 86-106; sequence YVVILFAVLLTISCLLVSFAN. A topological domain (periplasmic) is located at residue S107. Residues 108–128 traverse the membrane as a helical segment; the sequence is FSLLLIGRACLGLALGGFWAM. The Cytoplasmic portion of the chain corresponds to 129-147; sequence SASLTMRLVPPRTVPKALS. Residues 148–168 form a helical membrane-spanning segment; it reads VIFGAVSIALVIAAPLGSFLG. The Periplasmic portion of the chain corresponds to 169-175; that stretch reads ELIGWRN. The helical transmembrane segment at 176 to 196 threads the bilayer; sequence VFNAAAVMGVLCIFWIIKSLP. Residues 197-215 lie on the Cytoplasmic side of the membrane; sequence SLPGKPSHQKQNTFRLLQR. The helical transmembrane segment at 216-236 threads the bilayer; sequence PGVMAGMIAIFMSFAGQFAFF. The Periplasmic segment spans residues 237–255; the sequence is TYIRPVYMNLAGFGVDGLT. The chain crosses the membrane as a helical span at residues 256 to 276; that stretch reads LVLLSFGIASFIGTSLSSFIL. The Cytoplasmic portion of the chain corresponds to 277 to 281; it reads KRSVK. The helical transmembrane segment at 282–302 threads the bilayer; the sequence is LALAGAPLILAVSALVLTLCG. Residues 303 to 305 lie on the Periplasmic side of the membrane; it reads SDK. The chain crosses the membrane as a helical span at residues 306–326; the sequence is IVATGVAIIWGLTFALVPVGW. Topologically, residues 327–343 are cytoplasmic; it reads STWSTRSLADQAEKAGS. Residues 344 to 364 form a helical membrane-spanning segment; sequence IQVAVIQLANTCGAAIGGYAL. Over 365 to 366 the chain is Periplasmic; the sequence is DN. The chain crosses the membrane as a helical span at residues 367–387; it reads IGLTSPLMLSGTLMLLTALLV. The Cytoplasmic portion of the chain corresponds to 388-394; it reads TAKVKMK.

It belongs to the major facilitator superfamily. DHA1 family. NepI (TC 2.A.1.2.26) subfamily.

It is found in the cell inner membrane. It carries out the reaction inosine(in) + H(+)(out) = inosine(out) + H(+)(in). It catalyses the reaction guanosine(in) + H(+)(out) = guanosine(out) + H(+)(in). Its function is as follows. Involved in the efflux of purine ribonucleosides, such as inosine and guanosine. This Shigella dysenteriae serotype 1 (strain Sd197) protein is Purine ribonucleoside efflux pump NepI.